Here is a 459-residue protein sequence, read N- to C-terminus: tRNA modification GTPase MnmE (459 aa).

(6S)-5-formyl-5,6,7,8-tetrahydrofolate is bound by residues Arg23, Glu86, and Arg125. Positions 221 to 380 (GIDAVIIGKP…LENAITELFV (160 aa)) constitute a TrmE-type G domain. Asn231 lines the K(+) pocket. Residues 231-236 (NVGKSS), 250-256 (TDIPGTT), and 275-278 (DTAG) each bind GTP. Ser235 serves as a coordination point for Mg(2+). Residues Thr250, Ile252, and Thr255 each coordinate K(+). Mg(2+) is bound at residue Thr256. Lys459 serves as a coordination point for (6S)-5-formyl-5,6,7,8-tetrahydrofolate.

This sequence belongs to the TRAFAC class TrmE-Era-EngA-EngB-Septin-like GTPase superfamily. TrmE GTPase family. As to quaternary structure, homodimer. Heterotetramer of two MnmE and two MnmG subunits. It depends on K(+) as a cofactor.

It is found in the cytoplasm. In terms of biological role, exhibits a very high intrinsic GTPase hydrolysis rate. Involved in the addition of a carboxymethylaminomethyl (cmnm) group at the wobble position (U34) of certain tRNAs, forming tRNA-cmnm(5)s(2)U34. The sequence is that of tRNA modification GTPase MnmE from Acetivibrio thermocellus (strain ATCC 27405 / DSM 1237 / JCM 9322 / NBRC 103400 / NCIMB 10682 / NRRL B-4536 / VPI 7372) (Clostridium thermocellum).